A 38-amino-acid chain; its full sequence is Cytochrome b6-f complex subunit 5 (38 aa).

The chain crosses the membrane as a helical span at residues 5 to 25 (LLLGIVLGLIPVTLAGLFVAA).

The protein belongs to the PetG family. In terms of assembly, the 4 large subunits of the cytochrome b6-f complex are cytochrome b6, subunit IV (17 kDa polypeptide, PetD), cytochrome f and the Rieske protein, while the 4 small subunits are PetG, PetL, PetM and PetN. The complex functions as a dimer.

The protein localises to the cellular thylakoid membrane. Component of the cytochrome b6-f complex, which mediates electron transfer between photosystem II (PSII) and photosystem I (PSI), cyclic electron flow around PSI, and state transitions. PetG is required for either the stability or assembly of the cytochrome b6-f complex. This is Cytochrome b6-f complex subunit 5 from Picosynechococcus sp. (strain ATCC 27264 / PCC 7002 / PR-6) (Agmenellum quadruplicatum).